Here is a 67-residue protein sequence, read N- to C-terminus: Small ribosomal subunit protein eS27 (67 aa).

Cysteine 22, cysteine 25, cysteine 41, and cysteine 44 together coordinate Zn(2+). The C4-type zinc finger occupies 22-44 (CPDCGNEQITFSHAAMVVRCLVC).

Belongs to the eukaryotic ribosomal protein eS27 family. Part of the 30S ribosomal subunit. Zn(2+) serves as cofactor.

The protein is Small ribosomal subunit protein eS27 of Pyrobaculum aerophilum (strain ATCC 51768 / DSM 7523 / JCM 9630 / CIP 104966 / NBRC 100827 / IM2).